An 859-amino-acid polypeptide reads, in one-letter code: MERGRNQLLIAILLASACLIYCRQQYVTVFYGVPAWKNASIPLFCATKNRDTWGTIQCLPDNDDYQEIPLNVTEAFDAWDNTITEQAIEDVWNLFETSIKPCVKLTPLCVAMKCNISTSDTTMIRTTTPSTAKEAPISDNSPCIRTNNCSGLEEEKIVKCHFNMTGLERDKKKQYNETWYSSDVVCDNSTDQTTNETTCYMNHCNTSVITESCDKHYWDAMRFRYCAPPGFAILRCNDTKYSGFAPNCSKVVASTCTRMMETQTSTWFGFNGTRAENRTYIYWHGKDNRTIISLNKHYNLSMYCRRPGNKTVVPITLMSGQRFHSRPIINKRPRQAWCWFKGNWTEAMQEVKQTLAEHPRYKGTKNITDITFKAPERGSDPEVTYMWSNCRGEFFYCNMTWFLNWVENKPNTTKRNYAPCHIRQIINTWHKVGKNVYLPPREGELTCNSTVTSIIANIDERDNQTTNITFSADVAELYRLELGDYKLVEITPIGFAPTSQKRYSPAHGRPKRGAFVLGFLGFLTTAGVAMGTASLTLSAQSRTLLAGIVQQQQQLLDVVKRQQELLRLTVWGTKILQARVTAIEKYLKDQAQLNSWGCAFRQVCHTTVPWANESLTPDWNNMTWQEWEQKVRYLEANISQSLEEAQLQQEKNMYELQKLNNWDVFTNWFDLTSWISYIQYGVYIVVGIIVLRIVIYVVQMLSRLRKGYRPVFSSSPGYIQQIHIHKDPEQPASEETEEDVGGNGGDRSWPWQIEYIHFLIRQLIRLLTGLYNICRNLLSRIFQTLQPILQNLRDWLRPKVAFLQYGCEWIQEAFQAAARAARETLAGACRDVWGMLQRIGRGILAVPRRIRQGAELALL.

The signal sequence occupies residues 1–24 (MERGRNQLLIAILLASACLIYCRQ). The Extracellular portion of the chain corresponds to 25 to 680 (QYVTVFYGVP…LTSWISYIQY (656 aa)). N-linked (GlcNAc...) asparagine; by host glycosylation occurs at Asn38. Cys45 and Cys58 are joined by a disulfide. N-linked (GlcNAc...) asparagine; by host glycans are attached at residues Asn71, Asn115, Asn148, Asn163, Asn176, Asn188, Asn195, Asn205, Asn237, Asn247, Asn271, Asn277, Asn288, Asn299, Asn309, Asn343, Asn366, Asn398, Asn411, Asn448, Asn463, and Asn467. 5 disulfide bridges follow: Cys102/Cys213, Cys109/Cys204, Cys114/Cys160, Cys226/Cys256, and Cys236/Cys248. Residues 114 to 159 (CNISTSDTTMIRTTTPSTAKEAPISDNSPCIRTNNCSGLEEEKIVK) are V1. The segment at 160–204 (CHFNMTGLERDKKKQYNETWYSSDVVCDNSTDQTTNETTCYMNHC) is V2. The tract at residues 304–337 (CRRPGNKTVVPITLMSGQRFHSRPIINKRPRQAW) is V3. An intrachain disulfide couples Cys304 to Cys338. Disulfide bonds link Cys390/Cys447 and Cys397/Cys420. The segment at 397 to 420 (CNMTWFLNWVENKPNTTKRNYAPC) is V4. The interval 463-470 (NQTTNITF) is V5. The segment at 513-533 (GAFVLGFLGFLTTAGVAMGTA) is fusion peptide. The interval 576-592 (LQARVTAIEKYLKDQAQ) is immunosuppression. Asn612, Asn621, and Asn637 each carry an N-linked (GlcNAc...) asparagine; by host glycan. A coiled-coil region spans residues 625–646 (QEWEQKVRYLEANISQSLEEAQ). The segment at 658–679 (KLNNWDVFTNWFDLTSWISYIQ) is MPER; binding to GalCer. The chain crosses the membrane as a helical span at residues 681-701 (GVYIVVGIIVLRIVIYVVQML). The Cytoplasmic segment spans residues 702 to 859 (SRLRKGYRPV…IRQGAELALL (158 aa)). Positions 708–711 (YRPV) match the YXXV motif; contains endocytosis signal motif. The segment at 726-745 (KDPEQPASEETEEDVGGNGG) is disordered. Residue Cys774 is the site of S-palmitoyl cysteine; by host attachment. The short motif at 858-859 (LL) is the Di-leucine internalization motif element.

In terms of assembly, the mature envelope protein (Env) consists of a homotrimer of non-covalently associated gp120-gp41 heterodimers. The resulting complex protrudes from the virus surface as a spike. There seems to be as few as 10 spikes on the average virion. Interacts with human CD4, CCR5 and CXCR4, to form a P4HB/PDI-CD4-CXCR4-gp120 complex. Gp120 also interacts with the C-type lectins CD209/DC-SIGN and CLEC4M/DC-SIGNR (collectively referred to as DC-SIGN(R)). Gp120 and gp41 interact with GalCer. The mature envelope protein (Env) consists of a homotrimer of non-covalently associated gp120-gp41 heterodimers. The resulting complex protrudes from the virus surface as a spike. There seems to be as few as 10 spikes on the average virion. Specific enzymatic cleavages in vivo yield mature proteins. Envelope glycoproteins are synthesized as an inactive precursor that is heavily N-glycosylated and processed likely by host cell furin in the Golgi to yield the mature SU and TM proteins. The cleavage site between SU and TM requires the minimal sequence [KR]-X-[KR]-R. Post-translationally, palmitoylation of the transmembrane protein and of Env polyprotein (prior to its proteolytic cleavage) is essential for their association with host cell membrane lipid rafts. Palmitoylation is therefore required for envelope trafficking to classical lipid rafts, but not for viral replication.

The protein resides in the virion membrane. It localises to the host cell membrane. Its subcellular location is the host endosome membrane. In terms of biological role, the surface protein gp120 (SU) attaches the virus to the host lymphoid cell by binding to the primary receptor CD4. This interaction induces a structural rearrangement creating a high affinity binding site for a chemokine coreceptor like CXCR4 and/or CCR5. This peculiar 2 stage receptor-interaction strategy allows gp120 to maintain the highly conserved coreceptor-binding site in a cryptic conformation, protected from neutralizing antibodies. Since CD4 also displays a binding site for the disulfide-isomerase P4HB/PDI, a P4HB/PDI-CD4-CXCR4-gp120 complex may form. In that complex, P4HB/PDI could reach and reduce gp120 disulfide bonds, causing major conformational changes in gp120. TXN, another PDI family member could also be involved in disulfide rearrangements in Env during fusion. These changes are transmitted to the transmembrane protein gp41 and are thought to activate its fusogenic potential by unmasking its fusion peptide. Its function is as follows. The surface protein gp120 is a ligand for CD209/DC-SIGN and CLEC4M/DC-SIGNR, which are respectively found on dendritic cells (DCs), and on endothelial cells of liver sinusoids and lymph node sinuses. These interactions allow capture of viral particles at mucosal surfaces by these cells and subsequent transmission to permissive cells. DCs are professional antigen presenting cells, critical for host immunity by inducing specific immune responses against a broad variety of pathogens. They act as sentinels in various tissues where they take up antigen, process it, and present it to T-cells following migration to lymphoid organs. HIV subverts the migration properties of dendritic cells to gain access to CD4+ T-cells in lymph nodes. Virus transmission to permissive T-cells occurs either in trans (without DCs infection, through viral capture and transmission), or in cis (following DCs productive infection, through the usual CD4-gp120 interaction), thereby inducing a robust infection. In trans infection, bound virions remain infectious over days and it is proposed that they are not degraded, but protected in non-lysosomal acidic organelles within the DCs close to the cell membrane thus contributing to the viral infectious potential during DCs' migration from the periphery to the lymphoid tissues. On arrival at lymphoid tissues, intact virions recycle back to DCs' cell surface allowing virus transmission to CD4+ T-cells. Virion capture also seems to lead to MHC-II-restricted viral antigen presentation, and probably to the activation of HIV-specific CD4+ cells. The transmembrane protein gp41 (TM) acts as a class I viral fusion protein. Under the current model, the protein has at least 3 conformational states: pre-fusion native state, pre-hairpin intermediate state, and post-fusion hairpin state. During fusion of viral and target intracellular membranes, the coiled coil regions (heptad repeats) assume a trimer-of-hairpins structure, positioning the fusion peptide in close proximity to the C-terminal region of the ectodomain. The formation of this structure appears to drive apposition and subsequent fusion of viral and target cell membranes. Complete fusion occurs in host cell endosomes and is dynamin-dependent, however some lipid transfer might occur at the plasma membrane. The virus undergoes clathrin-dependent internalization long before endosomal fusion, thus minimizing the surface exposure of conserved viral epitopes during fusion and reducing the efficacy of inhibitors targeting these epitopes. Membranes fusion leads to delivery of the nucleocapsid into the cytoplasm. Functionally, the envelope glycoprotein gp160 precursor down-modulates cell surface CD4 antigen by interacting with it in the endoplasmic reticulum and blocking its transport to the cell surface. In terms of biological role, the gp120-gp41 heterodimer seems to contribute to T-cell depletion during HIV-1 infection. The envelope glycoproteins expressed on the surface of infected cells induce apoptosis through an interaction with uninfected cells expressing the receptor (CD4) and the coreceptors CXCR4 or CCR5. This type of bystander killing may be obtained by at least three distinct mechanisms. First, the interaction between the 2 cells can induce cellular fusion followed by nuclear fusion within the syncytium. Syncytia are condemned to die from apoptosis. Second, the 2 interacting cells may not fuse entirely and simply exchange plasma membrane lipids, after a sort of hemifusion process, followed by rapid death. Third, it is possible that virus-infected cells, on the point of undergoing apoptosis, fuse with CD4-expressing cells, in which case apoptosis is rapidly transmitted from one cell to the other and thus occurs in a sort of contagious fashion. Its function is as follows. The gp120-gp41 heterodimer allows rapid transcytosis of the virus through CD4 negative cells such as simple epithelial monolayers of the intestinal, rectal and endocervical epithelial barriers. Both gp120 and gp41 specifically recognize glycosphingolipids galactosyl-ceramide (GalCer) or 3' sulfo-galactosyl-ceramide (GalS) present in the lipid rafts structures of epithelial cells. Binding to these alternative receptors allows the rapid transcytosis of the virus through the epithelial cells. This transcytotic vesicle-mediated transport of virions from the apical side to the basolateral side of the epithelial cells does not involve infection of the cells themselves. The protein is Envelope glycoprotein gp160 (env) of Human immunodeficiency virus type 2 subtype A (isolate CAM2) (HIV-2).